The following is a 219-amino-acid chain: Protein ERP1 (219 aa).

The N-terminal stretch at 1–22 (MLLTSLLQVFACCLVLPAQVTA) is a signal peptide. Topologically, residues 23 to 186 (FYYYTSGAER…RDASEAVNSR (164 aa)) are lumenal. Residues 32-131 (RKCFHKELSK…KTKIDVEFQV (100 aa)) enclose the GOLD domain. A helical membrane pass occupies residues 187–207 (AMWWIVIQLIVLAVTCGWQMK). The Cytoplasmic portion of the chain corresponds to 208–219 (HLGKFFVKQKIL).

The protein belongs to the EMP24/GP25L family. As to quaternary structure, associates with EMP24, ERV25 and ERP2.

The protein resides in the endoplasmic reticulum membrane. Functionally, involved in vesicular protein trafficking. The chain is Protein ERP1 (ERP1) from Saccharomyces cerevisiae (strain ATCC 204508 / S288c) (Baker's yeast).